A 1088-amino-acid polypeptide reads, in one-letter code: Serine/threonine-protein kinase 11-interacting protein (1088 aa).

LRR repeat units follow at residues 109-130 (SLRHLELRGVPLHCLHGLRGIY), 132-152 (QLETLICSRSLQALEELLSAC), 164-185 (ALLSANFSYNALTALDSSLRLL), 187-209 (ALRFLNLSHNQVQDCQGFLMDLC), 210-231 (ELHHLDISYNRLHLVPRMGPSG), 233-254 (ALGVLILRGNELRSLHGLEQLR), 255-276 (NLRHLDLAYNLLEGHRELSPLW), and 280-301 (ELRKLYLEGNPLWFHPEHRAAT). Disordered regions lie at residues 335–407 (GLSP…SPAG) and 437–533 (LEPS…QKEV). Residues 346–367 (PVGSTPETSGGPDLSDSLSSGG) are compositionally biased toward low complexity. A compositionally biased stretch (basic residues) spans 375-385 (HKVKSRVRVRR). A phosphoserine mark is found at Ser-387, Ser-389, and Ser-392. Positions 447-460 (TPTTSAPSAPPASS) are enriched in low complexity. Ser-470 bears the Phosphoserine mark. Residues 508–529 (EEGEMVEQGEEEAGEEEEEEQD) show a composition bias toward acidic residues. Ser-599 carries the post-translational modification Phosphoserine. Disordered regions lie at residues 724–780 (TPNR…SPPP) and 978–1009 (DAAGSPAEPSPPAASGEASEKVPPSGPGPAVR). Positions 733 to 742 (EQSLAPSPSA) are enriched in polar residues. Residues 750-759 (GHGDHLDRAK) show a composition bias toward basic and acidic residues. 3 positions are modified to phosphoserine: Ser-761, Ser-773, and Ser-777. Residues 978–994 (DAAGSPAEPSPPAASGE) show a composition bias toward low complexity.

The protein belongs to the STK11IP family. In terms of assembly, found in a ternary complex composed of STK11/LKB1, STK11IP and SMAD4. Interacts with STK11/LKB1 and SMAD4.

The protein resides in the cytoplasm. May regulate STK11/LKB1 function by controlling its subcellular localization. This Homo sapiens (Human) protein is Serine/threonine-protein kinase 11-interacting protein (STK11IP).